The primary structure comprises 694 residues: Methionine--tRNA ligase (694 aa).

The 'HIGH' region signature appears at 14–24 (PYANGPIHLGH). Residues cysteine 145, cysteine 148, cysteine 158, and cysteine 161 each coordinate Zn(2+). The 'KMSKS' region motif lies at 330–334 (KMSKS). Residue lysine 333 participates in ATP binding. Residues 558–579 (SLQATAGQPEPHSQVRHAEHQQ) are disordered. A tRNA-binding domain is found at 593–694 (DFAKVDLRIA…EGAQPGMKVK (102 aa)).

Belongs to the class-I aminoacyl-tRNA synthetase family. MetG type 1 subfamily. Homodimer. Requires Zn(2+) as cofactor.

It is found in the cytoplasm. The enzyme catalyses tRNA(Met) + L-methionine + ATP = L-methionyl-tRNA(Met) + AMP + diphosphate. Its function is as follows. Is required not only for elongation of protein synthesis but also for the initiation of all mRNA translation through initiator tRNA(fMet) aminoacylation. The chain is Methionine--tRNA ligase from Methylococcus capsulatus (strain ATCC 33009 / NCIMB 11132 / Bath).